We begin with the raw amino-acid sequence, 498 residues long: Lysine--tRNA ligase (498 aa).

The Mg(2+) site is built by glutamate 401 and glutamate 408.

This sequence belongs to the class-II aminoacyl-tRNA synthetase family. In terms of assembly, homodimer. The cofactor is Mg(2+).

It is found in the cytoplasm. It catalyses the reaction tRNA(Lys) + L-lysine + ATP = L-lysyl-tRNA(Lys) + AMP + diphosphate. In Dehalococcoides mccartyi (strain ATCC BAA-2100 / JCM 16839 / KCTC 5957 / BAV1), this protein is Lysine--tRNA ligase.